The primary structure comprises 574 residues: Ankyrin repeat protein B18 (574 aa).

ANK repeat units lie at residues 56-87 (TGYTALHCYLYNNYFTNDVLKILLNHDVNVTM), 135-164 (IKSRYMLLKEEDIDENIVSTLLDKGIDPNF), 167-213 (DGYT…NLNA), 217-249 (CGNTPFHLYLSIEMCNNIHMTKMLLTFNPNFKI), 253-285 (HGLTPILCYITSDYIQHDILVMLIHHYETNVGE), and 327-356 (EGKTLLHVACEYNNTQVIDYLIRINGDINA). An F-box domain is found at 541-574 (NCLLTLLPSEIIYEILYMLTINDLYNISYPPTKV).

The polypeptide is Ankyrin repeat protein B18 (Homo sapiens (Human)).